The sequence spans 133 residues: Snaclec botrocetin subunit alpha (133 aa).

3 cysteine pairs are disulfide-bonded: C2-C13, C30-C128, and C103-C120. Residues 9–129 (YEGNCYKFFQ…CAQKNPFVCK (121 aa)) enclose the C-type lectin domain.

This sequence belongs to the snaclec family. Heterodimer of subunits alpha and beta; disulfide-linked. Botrocetin and vWF form a soluble complex. In terms of tissue distribution, expressed by the venom gland.

The protein localises to the secreted. Its function is as follows. Snaclec that binds to von Willebrand factor (VWF) and induces its interaction with GPIbalpha (GP1BA) (via the vWF A1 domain), resulting in platelet aggregation. In Bothrops jararaca (Jararaca), this protein is Snaclec botrocetin subunit alpha.